A 446-amino-acid polypeptide reads, in one-letter code: Beta-glucosidase A (446 aa).

Glu166 (proton donor) is an active-site residue. The active-site Nucleophile is Glu351.

The protein belongs to the glycosyl hydrolase 1 family.

The catalysed reaction is Hydrolysis of terminal, non-reducing beta-D-glucosyl residues with release of beta-D-glucose.. Its pathway is glycan metabolism; cellulose degradation. The sequence is that of Beta-glucosidase A (bglA) from Thermotoga maritima (strain ATCC 43589 / DSM 3109 / JCM 10099 / NBRC 100826 / MSB8).